We begin with the raw amino-acid sequence, 294 residues long: Non-selective voltage-gated ion channel VDAC2 (294 aa).

Residue Ala2 is modified to N-acetylalanine. ATP contacts are provided by Lys23 and Lys31. Lys31 is subject to N6-acetyllysine; alternate. Residue Lys31 is modified to N6-succinyllysine; alternate. Residue Lys31 forms a Glycyl lysine isopeptide (Lys-Gly) (interchain with G-Cter in ubiquitin); alternate linkage. 2 consecutive transmembrane segments (beta stranded) span residues 37-46 (LVKLDVKTKS) and 50-58 (VEFSTSGSS). A Glycyl lysine isopeptide (Lys-Gly) (interchain with G-Cter in ubiquitin) cross-link involves residue Lys64. Residues 65 to 75 (VTGTLETKYKW) traverse the membrane as a beta stranded segment. A Phosphotyrosine modification is found at Tyr78. A run of 3 beta stranded transmembrane segments spans residues 80–87 (LTFTEKWN), 91–100 (TLGTEIAIED), and 106–115 (LKLTFDTTFS). Thr118 is modified (phosphothreonine). Lys120 is subject to N6-acetyllysine; alternate. Residue Lys120 forms a Glycyl lysine isopeptide (Lys-Gly) (interchain with G-Cter in ubiquitin); alternate linkage. A Glycyl lysine isopeptide (Lys-Gly) (interchain with G-Cter in ubiquitin) cross-link involves residue Lys121. 4 beta stranded membrane passes run 122–131 (SGKIKSSYKR), 134–141 (INLGCDVD), 148–156 (AIHGSAVFG), and 161–169 (LAGYQMTFD). Lys172 participates in a covalent cross-link: Glycyl lysine isopeptide (Lys-Gly) (interchain with G-Cter in ubiquitin). Beta stranded transmembrane passes span 174–186 (KLTR…GYRT), 189–196 (FQLHTNVN), 200–209 (EFGGSIYQKV), 213–222 (LDTSVNLAWT), 229–238 (RFGIAAKYQL), and 242–249 (ASISAKVN). At Ser251 the chain carries Phosphoserine. NAD(+) is bound by residues 253–255 (LIG) and 271–275 (SALVD). The next 2 beta stranded transmembrane spans lie at 253-262 (LIGVGYTQTL) and 265-274 (GVKLTLSALV). Residue Lys277 is modified to N6-acetyllysine; alternate. Lys277 is covalently cross-linked (Glycyl lysine isopeptide (Lys-Gly) (interchain with G-Cter in ubiquitin); alternate). The beta stranded transmembrane segment at 284–293 (HKLGLALELE) threads the bilayer.

Belongs to the eukaryotic mitochondrial porin family. As to quaternary structure, monomer, homodimer and higher order oligomers; formation of higher order structures is necessary for scramblase activity. Interacts with ARMC12 in a TBC1D21-dependent manner. Interacts with KLC3. Interacts with SPATA33. Interacts with PPP3CC in a SPATA33-dependent manner. Post-translationally, ubiquitinated by PRKN during mitophagy, leading to its degradation and enhancement of mitophagy. Deubiquitinated by USP30.

The protein localises to the mitochondrion outer membrane. It is found in the membrane. The enzyme catalyses chloride(in) = chloride(out). It carries out the reaction K(+)(in) = K(+)(out). The catalysed reaction is a 1,2-diacyl-sn-glycero-3-phospho-L-serine(in) = a 1,2-diacyl-sn-glycero-3-phospho-L-serine(out). It catalyses the reaction a 1,2-diacyl-sn-glycero-3-phosphocholine(in) = a 1,2-diacyl-sn-glycero-3-phosphocholine(out). The enzyme catalyses a 1,2-diacyl-sn-glycero-3-phospho-(1D-myo-inositol)(in) = a 1,2-diacyl-sn-glycero-3-phospho-(1D-myo-inositol)(out). In terms of biological role, non-selective voltage-gated ion channel that mediates the transport of anions and cations through the mitochondrion outer membrane and plasma membrane. The channel adopts an open conformation at zero mV and a closed conformation at both positive and negative potentials. There are two populations of channels; the main that functions in a lower open-state conductance with lower ion selectivity, that switch, in a voltage-dependent manner, from the open to a low-conducting 'closed' state and the other that has a normal ion selectivity in the typical high conductance, 'open' state. Binds various lipids, including the sphingolipid ceramide, the phospholipid phosphatidylcholine, and the sterols cholesterol and oxysterol. Binding of ceramide promotes the mitochondrial outer membrane permeabilization (MOMP) apoptotic pathway. Functionally, catalyzes the scrambling of phospholipids across the outer mitochondrial membrane; the mechanism is unrelated to channel activity and is capable of translocating both anionic and zwitterionic phospholipids. In Oryctolagus cuniculus (Rabbit), this protein is Non-selective voltage-gated ion channel VDAC2.